Here is a 1483-residue protein sequence, read N- to C-terminus: Guanylyl cyclase, membrane (1483 aa).

The next 6 membrane-spanning stretches (helical) occupy residues 50–70, 143–163, 168–188, 198–218, 219–239, and 242–262; these read ISII…YISP, FILR…TFTA, LWKL…LIFE, MVLL…PSML, ASGG…QIAG, and MVLL…ISRF. The segment at 323–376 is disordered; that stretch reads KKDEESNLTGKKQSKVVVSPPPPPTAAAPQQQDNEISTPQNSRKIVDPQSPSSL. Residues 355-376 are compositionally biased toward polar residues; it reads DNEISTPQNSRKIVDPQSPSSL. The region spanning 395–517 is the Guanylate cyclase 1 domain; sequence TVLFCEIVNF…DTINTSSRMA (123 aa). 2 disordered regions span residues 598 to 619 and 672 to 838; these read NNTI…THPN and LTSP…GDDF. Positions 610–619 are enriched in polar residues; that stretch reads GSATGPTHPN. Composition is skewed to low complexity over residues 672 to 684, 693 to 712, and 720 to 765; these read LTSP…PQQS, SPRL…SSST, and NNNN…NNNN. Residues 772-786 show a composition bias toward polar residues; the sequence is SPISQNTTPTGSLSL. The next 6 helical transmembrane spans lie at 907 to 927, 982 to 1002, 1016 to 1036, 1040 to 1060, 1061 to 1081, and 1094 to 1114; these read ILAS…VDYF, IITG…YVVS, VVMV…SVPP, IPLD…CYNF, SGIK…FIEI, and IYLS…ITSY. A Guanylate cyclase 2 domain is found at 1168–1296; that stretch reads TIFLSDIVGF…ESVQITQQME (129 aa). Positions 1173, 1174, and 1217 each coordinate Mg(2+). 2 disordered regions span residues 1348-1369 and 1393-1483; these read QPEV…SLQY and NQND…SESS. Residues 1354-1369 are compositionally biased toward polar residues; it reads RSVSVSKSNFGGSLQY. The span at 1405–1416 shows a compositional bias: low complexity; sequence NENGNESSSSNI. Positions 1432–1444 are enriched in acidic residues; sequence NEDDESSYEDDQE. Residues 1446–1465 show a composition bias toward low complexity; it reads NQYLNNSENNKNNNNNSNQI.

It belongs to the adenylyl cyclase class-4/guanylyl cyclase family. As to quaternary structure, homodimer. The cofactor is Mg(2+).

It localises to the membrane. It carries out the reaction GTP = 3',5'-cyclic GMP + diphosphate. Its activity is regulated as follows. Activated by guanosine 5'-3-O-(thio)triphosphate (GTPgammaS). Inhibited by calcium. Its function is as follows. Synthesizes cyclic GMP (cGMP) from GTP, after activation by heterotrimeric or monomeric G proteins. Involved in chemotaxis. This is Guanylyl cyclase, membrane (gca) from Dictyostelium discoideum (Social amoeba).